The following is a 176-amino-acid chain: Small ribosomal subunit protein uS8c (176 aa).

It belongs to the universal ribosomal protein uS8 family. In terms of assembly, part of the 30S ribosomal subunit.

The protein localises to the plastid. Its subcellular location is the chloroplast. In terms of biological role, one of the primary rRNA binding proteins, it binds directly to 16S rRNA central domain where it helps coordinate assembly of the platform of the 30S subunit. The polypeptide is Small ribosomal subunit protein uS8c (rps8) (Stigeoclonium helveticum (Green alga)).